We begin with the raw amino-acid sequence, 120 residues long: Large ribosomal subunit protein uL18 (120 aa).

The protein belongs to the universal ribosomal protein uL18 family. In terms of assembly, part of the 50S ribosomal subunit; part of the 5S rRNA/L5/L18/L25 subcomplex. Contacts the 5S and 23S rRNAs.

Its function is as follows. This is one of the proteins that bind and probably mediate the attachment of the 5S RNA into the large ribosomal subunit, where it forms part of the central protuberance. The polypeptide is Large ribosomal subunit protein uL18 (Staphylococcus epidermidis (strain ATCC 35984 / DSM 28319 / BCRC 17069 / CCUG 31568 / BM 3577 / RP62A)).